Reading from the N-terminus, the 549-residue chain is Polymorphic pseudokinase ROP5 (549 aa).

A signal peptide spans 1 to 24; that stretch reads MATKLARLATWLVLVGCLLWRAGA. The 294-residue stretch at 234–527 folds into the Protein kinase domain; sequence LKLVEPLRVG…LEAMETPEFL (294 aa). Arg241, Asp244, Arg245, Ser246, Lys263, Met337, Pro338, Ala340, Asp343, and Asp393 together coordinate ATP. Asp244 lines the ADP pocket. The ADP site is built by Ser246, Lys263, Met337, Pro338, and Ala340. ADP is bound at residue Asp393. Mg(2+) is bound by residues Asp393 and Asp407. The N-linked (GlcNAc...) asparagine glycan is linked to Asn434. A disulfide bridge links Cys458 with Cys492.

This sequence belongs to the protein kinase superfamily. Ser/Thr protein kinase family. In terms of assembly, component of a complex at least composed of ROP18 and ROP5. Interacts with GRA7. Interacts with ROP17. Interacts with mouse IRGA6/IIGP1; the interaction results in inhibition of IRGA6/IIGP1 GTPase activity and/or oligomerization.

It is found in the secreted. Its subcellular location is the parasitophorous vacuole. The protein resides in the cytoplasmic vesicle. It localises to the secretory vesicle. The protein localises to the rhoptry. Pseudokinase. Essential for virulence in the type I lineage. Mediates parasite survival in mouse monocytes. Required for the parasite ability to resist mouse innate immune effectors triggered by the IFN-gamma (IFNG). Reduces the accumulation of mouse IRGA6 (IIGP1) and IRGB6 (TGTP1/TGTP2), immunity-related GTPases (IRGs) that protect mice from infection by certain intracellular pathogens, on the parasitophorous vacuole and IRG-mediated killing of parasites by mouse cells. Regulates the activity of ROP18, an active kinase that targets IRGs to prevent IRG-mediated parasite killing by mouse cells. Acts as an allosteric inhibitor of mouse IRGA6 (IIGP1). Does not affect IFN-gamma (IFNG)-mediated parasite killing in human cells that do not possess the large variety of IRGs. In Toxoplasma gondii, this protein is Polymorphic pseudokinase ROP5.